The chain runs to 215 residues: Cytochrome b6 (215 aa).

The chain crosses the membrane as a helical span at residues 32 to 52 (IFYCLGGITLTCFLVQIATGF). Cys35 contributes to the heme c binding site. Residues His86 and His100 each contribute to the heme b site. Helical transmembrane passes span 90-110 (ASMM…TGGF), 116-136 (LTWV…VTGY), and 186-206 (LHTF…FLMI). Residues His187 and His202 each contribute to the heme b site.

This sequence belongs to the cytochrome b family. PetB subfamily. The 4 large subunits of the cytochrome b6-f complex are cytochrome b6, subunit IV (17 kDa polypeptide, PetD), cytochrome f and the Rieske protein, while the 4 small subunits are PetG, PetL, PetM and PetN. The complex functions as a dimer. Heme b serves as cofactor. Requires heme c as cofactor.

Its subcellular location is the plastid. The protein resides in the chloroplast thylakoid membrane. Functionally, component of the cytochrome b6-f complex, which mediates electron transfer between photosystem II (PSII) and photosystem I (PSI), cyclic electron flow around PSI, and state transitions. The polypeptide is Cytochrome b6 (Adiantum capillus-veneris (Maidenhair fern)).